A 287-amino-acid chain; its full sequence is ATP synthase gamma chain (287 aa).

The protein belongs to the ATPase gamma chain family. As to quaternary structure, F-type ATPases have 2 components, CF(1) - the catalytic core - and CF(0) - the membrane proton channel. CF(1) has five subunits: alpha(3), beta(3), gamma(1), delta(1), epsilon(1). CF(0) has three main subunits: a, b and c.

The protein resides in the cell inner membrane. In terms of biological role, produces ATP from ADP in the presence of a proton gradient across the membrane. The gamma chain is believed to be important in regulating ATPase activity and the flow of protons through the CF(0) complex. This chain is ATP synthase gamma chain, found in Marinobacter nauticus (strain ATCC 700491 / DSM 11845 / VT8) (Marinobacter aquaeolei).